Consider the following 501-residue polypeptide: MNFHVTSGTPEKQRTAALVVGIYEDEKLSSYAQRIDKASEGYVSRLIKQGDFTGKKGQALLLFALPGVKAERVLLMGCGQKDKVTAKNLRQSWSGAVKALQACGATEAMICPLEAKPKDEELTQWARLIVETAEQALYRYEHTKSKKESLKKPLAKLTLLLDQRSQQPLAEQGIQQGQAIAKGVNLARDLGNLPGNICTPTYLADEARRLAKEYKSLKAKILEQAEMEKLGLGALLAVSRGSRQPPKLITLEYKGAPGKQKPIVLVGKGLTFDAGGISIKPGERMDEMKYDMCGGAGVLGTMQACAELELPLNVIAVVPSSENLPDGAANKPGDVLTSLSGQTIEVLNTDAEGRLILCDALTYSKRYRPDVVIDVATLTGACVIALGAHASGLLSNDQSLAEHLLAAGQTSDDRAWQLPLWDDYQQQLDSNFADMANIGGRGAGTITAACFLARFTEEFRWAHLDIAGTAWLSGKEKGATGRPVPLLTQYLIQRAQEAKTS.

2 residues coordinate Mn(2+): lysine 268 and aspartate 273. Lysine 280 is a catalytic residue. Positions 291, 350, and 352 each coordinate Mn(2+). The active site involves arginine 354.

The protein belongs to the peptidase M17 family. The cofactor is Mn(2+).

It localises to the cytoplasm. The enzyme catalyses Release of an N-terminal amino acid, Xaa-|-Yaa-, in which Xaa is preferably Leu, but may be other amino acids including Pro although not Arg or Lys, and Yaa may be Pro. Amino acid amides and methyl esters are also readily hydrolyzed, but rates on arylamides are exceedingly low.. The catalysed reaction is Release of an N-terminal amino acid, preferentially leucine, but not glutamic or aspartic acids.. Presumably involved in the processing and regular turnover of intracellular proteins. Catalyzes the removal of unsubstituted N-terminal amino acids from various peptides. The protein is Probable cytosol aminopeptidase of Nitrosococcus oceani (strain ATCC 19707 / BCRC 17464 / JCM 30415 / NCIMB 11848 / C-107).